The following is a 79-amino-acid chain: Small ribosomal subunit protein bS18 (79 aa).

This sequence belongs to the bacterial ribosomal protein bS18 family. As to quaternary structure, part of the 30S ribosomal subunit. Forms a tight heterodimer with protein bS6.

In terms of biological role, binds as a heterodimer with protein bS6 to the central domain of the 16S rRNA, where it helps stabilize the platform of the 30S subunit. In Listeria innocua serovar 6a (strain ATCC BAA-680 / CLIP 11262), this protein is Small ribosomal subunit protein bS18.